Reading from the N-terminus, the 437-residue chain is ATP-dependent RNA helicase RhlB (437 aa).

The Q motif motif lies at 9–37; it reads KKFADFPLHKEVQQALNEVGFEFCTPIQA. A Helicase ATP-binding domain is found at 40–219; the sequence is LPILLAKKDI…YDHMNEPEKV (180 aa). 53 to 60 provides a ligand contact to ATP; that stretch reads AQTGTGKT. Positions 165-168 match the DEAD box motif; the sequence is DEAD. Positions 243–390 constitute a Helicase C-terminal domain; the sequence is KMPLLLSLLE…VTSYDSEALL (148 aa). A disordered region spans residues 394–437; that stretch reads PAPKRIHRKPSSHSRNSRDRSGSRPQGGHRGNAPRRHDKTRRHS. Positions 425 to 437 are enriched in basic residues; it reads NAPRRHDKTRRHS.

The protein belongs to the DEAD box helicase family. RhlB subfamily. Component of the RNA degradosome, which is a multiprotein complex involved in RNA processing and mRNA degradation.

The protein localises to the cytoplasm. The enzyme catalyses ATP + H2O = ADP + phosphate + H(+). Its function is as follows. DEAD-box RNA helicase involved in RNA degradation. Has RNA-dependent ATPase activity and unwinds double-stranded RNA. The polypeptide is ATP-dependent RNA helicase RhlB (Shewanella piezotolerans (strain WP3 / JCM 13877)).